We begin with the raw amino-acid sequence, 629 residues long: MQYHEQFDVIVVGGGHAGTEAATAAARMGLNTLLLTHNIDTLGHMSCNPAIGGIGKGHLVKEVDALGGIMARATDLAGIQFRTLNSSKGPAVRATRAQADRLLYKAVVRQMLENYPNLKIFQQACDDLIMDGDRVAGVVTQSGIRISGKTVVLTVGTFLNGLIHIGMENYKGGRAGDPPSIALAQRLREMPLRIDRLKTGTPPRIDARSVDLSVMQAQYGDDPRPVFSFIGDASQHPRQVPCYVTHTNERTHDVIRNNLDRSPMYAGVIEGIGPRYCPSIEDKITRFADKTAHQIFVEPEGLTTHELYPNGISTSLPFDVQVQIVRSIRGFENAHITRPGYAIEYDFFDPRDLKANMESKYIGNLFFAGQINGTTGYEEAAAQGLMAGLNAGLRAQDKDPWHPRRDQAYMGVMIDDLSTLGTREPYRMFTSRAEYRLLLREDNADLRLTAIGRELGLVDDERWGKFNIKMEQVELERQRMRSTWIHPQHPSLEAVNALVNTPLTREQNLEELLRRPEVTYDALMAIEGVGPALSDHAAADQVEIQIKYAGYIERQYDEVEKQLRNENTLLPLDMNYRDVNGLSNEVIAKLNDAKPETIGQASRISGITPAAISILLVHLKKHGLLRKTA.

13-18 (GGGHAG) lines the FAD pocket. 273 to 287 (GPRYCPSIEDKITRF) contacts NAD(+).

The protein belongs to the MnmG family. As to quaternary structure, homodimer. Heterotetramer of two MnmE and two MnmG subunits. The cofactor is FAD.

Its subcellular location is the cytoplasm. Functionally, NAD-binding protein involved in the addition of a carboxymethylaminomethyl (cmnm) group at the wobble position (U34) of certain tRNAs, forming tRNA-cmnm(5)s(2)U34. This Aeromonas salmonicida (strain A449) protein is tRNA uridine 5-carboxymethylaminomethyl modification enzyme MnmG.